Consider the following 284-residue polypeptide: Four and a half LIM domains protein 5 (284 aa).

Residues 8 to 32 (CQYCMASLLGKKYVLKDDNPYCVSC) form a C4-type zinc finger. LIM zinc-binding domains follow at residues 39–100 (NYCE…ECSS), 101–160 (KCFH…KEFA), 161–220 (HYCS…LYAK), and 223–283 (AACT…VDTD).

In terms of assembly, interacts with CREM (via the third LIM domain). Interacts (via second LIM domain) with SPAG8.

Its subcellular location is the nucleus. In terms of biological role, may be involved in the regulation of spermatogenesis. Stimulates CREM transcriptional activity in a phosphorylation-independent manner. The sequence is that of Four and a half LIM domains protein 5 (FHL5) from Bos taurus (Bovine).